The following is a 205-amino-acid chain: Pre-rRNA-processing protein TSR2 (205 aa).

Residues 144–205 (SKRVVHIEGD…LVQPKGRRKH (62 aa)) form a disordered region. The span at 152-177 (GDDDEDDEDVEDYDDEDEDEEMDEVV) shows a compositional bias: acidic residues.

The protein belongs to the TSR2 family. In terms of assembly, interacts with RPS26A.

The protein resides in the cytoplasm. It localises to the nucleus. Required for 20S pre-rRNA processing. The protein is Pre-rRNA-processing protein TSR2 of Saccharomyces cerevisiae (strain ATCC 204508 / S288c) (Baker's yeast).